We begin with the raw amino-acid sequence, 147 residues long: Plasminogen receptor (KT) (147 aa).

The Extracellular segment spans residues 1-52 (MGFIFSKSMNENMKNQQEFMVTHARLQLERHLTMQNEMRERQMAMQIAWSRE). A helical transmembrane segment spans residues 53–73 (FLKYFGTFFGIATISLATGAL). Over 74 to 78 (KRKKP) the chain is Cytoplasmic. A helical transmembrane segment spans residues 79–99 (AFLVPIVPLSFIFTYQYDLGY). Topologically, residues 100-147 (GTLLQRMKSEAEDILETEKTKLELPKGLITFESLEKARREQSKLFSDK) are extracellular.

In terms of assembly, interacts with PLAT. Interacts with PLAUR. In terms of tissue distribution, expressed in monocytes; detected in differentiated monocytes but not in progenitor cells. Expressed in adrenal medulla and hippocampus.

It localises to the cell membrane. Its function is as follows. Receptor for plasminogen. Regulates urokinase plasminogen activator-dependent and stimulates tissue-type plasminogen activator-dependent cell surface plasminogen activation. Proposed to be part of a local catecholaminergic cell plasminogen activation system that regulates neuroendocrine prohormone processing. Involved in regulation of inflammatory response; regulates monocyte chemotactic migration and matrix metalloproteinase activation, such as of MMP2 and MMP9. This is Plasminogen receptor (KT) (Plgrkt) from Mus musculus (Mouse).